A 456-amino-acid chain; its full sequence is UDP-glycosyltransferase 74D1 (456 aa).

Residues serine 279, 332–334 (SPQ), 349–357 (HCGWNSTLE), and 371–374 (YSDQ) each bind UDP-alpha-D-glucose.

This sequence belongs to the UDP-glycosyltransferase family. Expressed in leaves.

Functionally, glucosyltransferase that glucosylates jasmonate (JA) and JA derivatives. Also active on indole-3-acetic acid (IAA), 4-coumrate, cinnamate and caffeate. This Arabidopsis thaliana (Mouse-ear cress) protein is UDP-glycosyltransferase 74D1 (UGT74D1).